Consider the following 3470-residue polypeptide: Mucin-4 (3470 aa).

The N-terminal stretch at Met-1 to Ala-28 is a signal peptide. Positions Thr-32–Gly-163 are disordered. Positions Ser-37 to Ser-57 are enriched in low complexity. 24 O-linked (GalNAc...) threonine glycosylation sites follow: Thr-42, Thr-44, Thr-65, Thr-68, Thr-87, Thr-91, Thr-96, Thr-97, Thr-98, Thr-99, Thr-100, Thr-103, Thr-104, Thr-106, Thr-117, Thr-130, Thr-131, Thr-132, Thr-145, Thr-146, Thr-150, Thr-151, Thr-152, and Thr-155. Residues Arg-43–Ser-2501 form a variable number of tandem repeats (VNTR) region. Residues Glu-66 to His-85 show a composition bias toward polar residues. Low complexity predominate over residues Thr-86–Ser-111. Residues Arg-112 to Gly-129 show a composition bias toward polar residues. Over residues Thr-130–Ser-162 the composition is skewed to low complexity. A glycan (N-linked (GlcNAc...) asparagine) is linked at Asn-188. A compositionally biased stretch (polar residues) spans Thr-199–Val-220. Disordered regions lie at residues Thr-199 to Ser-679, Phe-691 to Thr-925, Thr-938 to Val-1219, Leu-1232 to Val-1400, Leu-1413 to Val-1524, Leu-1537 to Thr-1647, and Thr-1660 to Thr-1992. Over residues Thr-221–Thr-232 the composition is skewed to low complexity. The segment covering Pro-233 to Ser-243 has biased composition (polar residues). Residues Thr-236 and Thr-241 are each glycosylated (O-linked (GalNAc...) threonine). Over residues Ser-251–Thr-272 the composition is skewed to low complexity. Residues Asp-273–Ile-283 show a composition bias toward polar residues. Asn-278 and Asn-286 each carry an N-linked (GlcNAc...) asparagine glycan. Positions Thr-284 to Thr-299 are enriched in low complexity. Thr-297 carries an O-linked (GalNAc...) threonine glycan. Over residues Pro-300 to Gln-335 the composition is skewed to polar residues. N-linked (GlcNAc...) asparagine glycosylation is present at Asn-311. Residues Thr-336–Thr-346 are compositionally biased toward low complexity. The span at Pro-347 to Gln-448 shows a compositional bias: polar residues. Thr-357, Thr-370, Thr-371, Thr-372, Thr-385, and Thr-423 each carry an O-linked (GalNAc...) threonine glycan. Residues Ser-449 to Ser-470 are compositionally biased toward low complexity. Residue Asn-465 is glycosylated (N-linked (GlcNAc...) asparagine). The span at Thr-479–Pro-489 shows a compositional bias: polar residues. An O-linked (GalNAc...) threonine glycan is attached at Thr-494. Low complexity predominate over residues His-496–Met-510. Residues Leu-511–Gly-577 are compositionally biased toward polar residues. Thr-513 is a glycosylation site (O-linked (GalNAc...) threonine). Residue Asn-517 is glycosylated (N-linked (GlcNAc...) asparagine). Thr-542 and Thr-545 each carry an O-linked (GalNAc...) threonine glycan. Asn-550 carries N-linked (GlcNAc...) asparagine glycosylation. Thr-551, Thr-584, Thr-585, Thr-586, Thr-587, Thr-588, Thr-592, Thr-594, Thr-599, Thr-605, Thr-618, Thr-619, Thr-620, Thr-633, Thr-634, Thr-639, Thr-640, and Thr-655 each carry an O-linked (GalNAc...) threonine glycan. Residues Thr-578–Thr-599 are compositionally biased toward low complexity. Polar residues predominate over residues His-600 to Pro-631. Low complexity predominate over residues Ser-632–Ser-647. Polar residues-rich tracts occupy residues Thr-653–Ser-679 and Phe-691–Gly-701. N-linked (GlcNAc...) asparagine glycosylation occurs at Asn-674. Residues Thr-702, Thr-708, Thr-709, Thr-710, Thr-711, and Thr-716 are each glycosylated (O-linked (GalNAc...) threonine). Positions Thr-702–Ser-723 are enriched in low complexity. N-linked (GlcNAc...) asparagine glycosylation occurs at Asn-718. Over residues Arg-724–Glu-741 the composition is skewed to polar residues. Residues Thr-742–Val-772 are compositionally biased toward low complexity. Residues Thr-743, Thr-744, Thr-757, and Thr-758 are each glycosylated (O-linked (GalNAc...) threonine). Residues Val-780–Lys-824 show a composition bias toward polar residues. N-linked (GlcNAc...) asparagine glycosylation occurs at Asn-798. Over residues Gly-825–Gly-848 the composition is skewed to low complexity. O-linked (GalNAc...) threonine glycans are attached at residues Thr-826, Thr-832, Thr-833, Thr-834, Thr-839, Thr-840, Thr-842, Thr-846, and Thr-853. The segment covering Asp-849–Pro-879 has biased composition (polar residues). Residue Asn-875 is glycosylated (N-linked (GlcNAc...) asparagine). The span at Ser-880–Ser-895 shows a compositional bias: low complexity. O-linked (GalNAc...) threonine glycosylation is found at Thr-901 and Thr-902. Over residues Thr-901–Thr-925 the composition is skewed to polar residues. An N-linked (GlcNAc...) asparagine glycan is attached at Asn-922. Over residues Lys-948 to Ser-968 the composition is skewed to low complexity. Residues Thr-950, Thr-952, Thr-956, Thr-957, Thr-958, Thr-959, Thr-963, and Thr-964 are each glycosylated (O-linked (GalNAc...) threonine). N-linked (GlcNAc...) asparagine glycosylation is present at Asn-966. The segment covering Ala-969 to Pro-1003 has biased composition (polar residues). O-linked (GalNAc...) threonine glycans are attached at residues Thr-990, Thr-991, Thr-992, Thr-1005, Thr-1006, Thr-1011, Thr-1012, and Thr-1015. A compositionally biased stretch (low complexity) spans Ser-1004–Ser-1019. Over residues Val-1020–Gln-1065 the composition is skewed to polar residues. Residue Asn-1024 is glycosylated (N-linked (GlcNAc...) asparagine). Residues Thr-1025, Thr-1026, Thr-1027, Thr-1029, and Thr-1038 are each glycosylated (O-linked (GalNAc...) threonine). N-linked (GlcNAc...) asparagine glycans are attached at residues Asn-1046, Asn-1072, and Asn-1091. Positions Ser-1066–Thr-1083 are enriched in low complexity. Polar residues predominate over residues Asn-1091 to Ser-1120. Low complexity predominate over residues Ser-1121–Thr-1140. Residues Thr-1125, Thr-1126, Thr-1127, Thr-1128, Thr-1132, Thr-1133, Thr-1135, Thr-1140, Thr-1174, Thr-1198, and Thr-1207 are each glycosylated (O-linked (GalNAc...) threonine). 2 stretches are compositionally biased toward polar residues: residues His-1141–Val-1219 and Leu-1232–Gly-1242. A glycan (N-linked (GlcNAc...) asparagine) is linked at Asn-1215. Thr-1243, Thr-1245, Thr-1249, Thr-1250, Thr-1251, Thr-1252, Thr-1256, Thr-1257, Thr-1259, Thr-1263, Thr-1270, Thr-1283, Thr-1284, Thr-1285, Thr-1298, Thr-1299, Thr-1304, Thr-1305, Thr-1318, and Thr-1319 each carry an O-linked (GalNAc...) threonine glycan. The segment covering Thr-1243 to Ser-1264 has biased composition (low complexity). The span at Arg-1265–Pro-1296 shows a compositional bias: polar residues. A compositionally biased stretch (low complexity) spans Ser-1297–Ser-1312. Residues Thr-1318 to Pro-1353 show a composition bias toward polar residues. Residue Asn-1339 is glycosylated (N-linked (GlcNAc...) asparagine). O-linked (GalNAc...) threonine glycans are attached at residues Thr-1341, Thr-1342, Thr-1355, Thr-1356, Thr-1365, Thr-1368, Thr-1372, Thr-1375, Thr-1376, Thr-1377, and Thr-1379. Residues Ser-1354–Val-1390 are compositionally biased toward low complexity. Polar residues-rich tracts occupy residues Leu-1391–Val-1400 and Leu-1413–Pro-1477. A glycan (N-linked (GlcNAc...) asparagine) is linked at Asn-1396. O-linked (GalNAc...) threonine glycosylation is found at Thr-1426, Thr-1430, Thr-1431, Thr-1440, Thr-1451, Thr-1453, Thr-1464, Thr-1465, and Thr-1466. Asn-1471 carries an N-linked (GlcNAc...) asparagine glycan. A compositionally biased stretch (low complexity) spans Ser-1478–Thr-1489. 4 O-linked (GalNAc...) threonine glycosylation sites follow: Thr-1479, Thr-1480, Thr-1499, and Thr-1512. Polar residues-rich tracts occupy residues Gln-1490 to Val-1524 and Leu-1537 to Gln-1553. N-linked (GlcNAc...) asparagine glycosylation is present at Asn-1520. 4 O-linked (GalNAc...) threonine glycosylation sites follow: Thr-1554, Thr-1555, Thr-1557, and Thr-1562. Residues Thr-1554–Ser-1569 show a composition bias toward low complexity. Residues Arg-1570–Glu-1587 show a composition bias toward polar residues. 8 O-linked (GalNAc...) threonine glycosylation sites follow: Thr-1588, Thr-1589, Thr-1590, Thr-1604, Thr-1609, Thr-1627, Thr-1635, and Thr-1636. Positions Thr-1588–Thr-1609 are enriched in low complexity. Residues Ala-1610 to Thr-1647 show a composition bias toward polar residues. Asn-1644 is a glycosylation site (N-linked (GlcNAc...) asparagine). Positions Lys-1670–Ser-1693 are enriched in low complexity. O-linked (GalNAc...) threonine glycosylation is found at Thr-1672, Thr-1674, Thr-1678, Thr-1679, Thr-1680, Thr-1681, Thr-1685, Thr-1686, Thr-1688, Thr-1699, and Thr-1714. Over residues Arg-1694–Pro-1725 the composition is skewed to polar residues. N-linked (GlcNAc...) asparagine glycosylation is present at Asn-1721. Positions Ser-1726–Gly-1742 are enriched in low complexity. Positions Thr-1747–Glu-1837 are enriched in polar residues. N-linked (GlcNAc...) asparagine glycosylation is present at Asn-1770. Thr-1838, Thr-1839, Thr-1840, Thr-1854, Thr-1873, Thr-1874, Thr-1888, Thr-1889, and Thr-1891 each carry an O-linked (GalNAc...) threonine glycan. A compositionally biased stretch (low complexity) spans Thr-1838–Thr-1859. The span at Ala-1860 to Val-1877 shows a compositional bias: polar residues. Over residues Thr-1878–Gln-1895 the composition is skewed to low complexity. Asn-1896 carries an N-linked (GlcNAc...) asparagine glycan. Positions Asn-1896–Asn-1927 are enriched in polar residues. Low complexity predominate over residues Pro-1928 to Ser-1945. O-linked (GalNAc...) threonine glycosylation is found at Thr-1930, Thr-1931, Thr-1932, Thr-1933, Thr-1937, Thr-1938, Thr-1940, Thr-1964, Thr-1965, Thr-1966, and Thr-1980. Residues Tyr-1946 to Thr-1992 are compositionally biased toward polar residues. N-linked (GlcNAc...) asparagine glycosylation is present at Asn-2022. Over residues Ser-2037 to Gln-2055 the composition is skewed to polar residues. 4 disordered regions span residues Ser-2037 to His-2107, Gln-2139 to Pro-2185, Thr-2205 to Ser-2237, and Thr-2262 to Leu-2368. O-linked (GalNAc...) threonine glycosylation is found at Thr-2056 and Thr-2057. The segment covering Thr-2056–Ser-2071 has biased composition (low complexity). The segment covering Arg-2072–Gly-2089 has biased composition (polar residues). 3 O-linked (GalNAc...) threonine glycosylation sites follow: Thr-2090, Thr-2091, and Thr-2092. The segment covering Thr-2090 to His-2107 has biased composition (low complexity). Residue Asn-2104 is glycosylated (N-linked (GlcNAc...) asparagine). O-linked (GalNAc...) threonine glycans are attached at residues Thr-2105 and Thr-2106. 3 N-linked (GlcNAc...) asparagine glycosylation sites follow: Asn-2148, Asn-2182, and Asn-2225. Polar residues-rich tracts occupy residues Thr-2205 to Ala-2229 and Thr-2262 to Ile-2303. Residues Thr-2264, Thr-2352, Thr-2354, Thr-2359, and Thr-2360 are each glycosylated (O-linked (GalNAc...) threonine). Over residues Thr-2344–Pro-2367 the composition is skewed to low complexity. Residues Pro-2458–Glu-2613 form the NIDO domain. Residues Glu-2614–Arg-2726 form the AMOP domain. Residues Arg-2738–Leu-2937 form the VWFD domain. N-linked (GlcNAc...) asparagine glycosylation is found at Asn-2755, Asn-2773, Asn-2801, Asn-2827, Asn-2844, Asn-2853, Asn-2888, Asn-2909, Asn-2916, Asn-2932, Asn-2958, Asn-2985, Asn-3003, Asn-3014, Asn-3054, Asn-3079, Asn-3102, Asn-3109, Asn-3157, and Asn-3174. The region spanning Pro-3173–Phe-3212 is the EGF-like 1 domain. Intrachain disulfides connect Cys-3177/Cys-3188, Cys-3182/Cys-3200, and Cys-3202/Cys-3211. N-linked (GlcNAc...) asparagine glycosylation is found at Asn-3240, Asn-3247, and Asn-3353. The EGF-like 2 domain maps to Val-3382–Glu-3421. Disulfide bonds link Cys-3385–Cys-3396, Cys-3390–Cys-3405, and Cys-3407–Cys-3420. The chain crosses the membrane as a helical span at residues Gly-3432 to Phe-3452.

A heterodimeric complex, composed of a mucin-4 alpha chain and a cysteine-rich transmembrane mucin-4 beta chain. Mucin-4 beta chain interacts with ERBB2 via the EGF-like domain 1. In nonpolarized cells, associates with ERBB2 and ERBB3. Post-translationally, proteolytically cleaved into 2 chains, mucin-4 alpha chain and mucin-4 beta chain. In terms of processing, highly O-glycosylated. Predominantly N-glycosylated. Expressed in trachea, duodenum and intestine. Lower expression in stomach, salivary glands, liver, gallbladder, and kidney.

It is found in the cell membrane. The protein resides in the secreted. In terms of biological role, membrane-bound mucin, a family of highly glycosylated proteins that constitute the major component of the mucus, the slimy and viscous secretion covering epithelial surfaces. These glycoproteins play important roles in the protection of the epithelium and are implicated in epithelial renewal and differentiation. Regulates cellular behavior through both anti-adhesive effects on cell-cell and cell-extracellular matrix interactions and its ability to act as an intramembrane ligand for ERBB2. Plays an important role in proliferation and differentiation of epithelial cells by inducing specific phosphorylation of ERBB2. In polarized epithelial cells, segregates ERBB2 and other ERBB receptors and prevents ERBB2 from acting as a coreceptor. The interaction with ERBB2 leads to enhanced expression of CDKN1B. The formation of a MUC4-ERBB2-ERBB3-NRG1 complex leads to down-regulation of CDKN1B, resulting in repression of apoptosis and stimulation of proliferation. Its ability to promote tumor growth may be mainly due to repression of apoptosis as opposed to proliferation. In Mus musculus (Mouse), this protein is Mucin-4 (Muc4).